Consider the following 714-residue polypeptide: Fatty acid oxidation complex subunit alpha (714 aa).

Residues 1–190 (MEMASAFTLN…KLGLVDDVVP (190 aa)) form an enoyl-CoA hydratase region. Positions 306–714 (APLNSVGILG…FWKTTATDLQ (409 aa)) are 3-hydroxyacyl-CoA dehydrogenase.

This sequence in the N-terminal section; belongs to the enoyl-CoA hydratase/isomerase family. It in the central section; belongs to the 3-hydroxyacyl-CoA dehydrogenase family. Heterotetramer of two alpha chains (FadJ) and two beta chains (FadI).

It is found in the cytoplasm. The enzyme catalyses a (3S)-3-hydroxyacyl-CoA = a (2E)-enoyl-CoA + H2O. It carries out the reaction a 4-saturated-(3S)-3-hydroxyacyl-CoA = a (3E)-enoyl-CoA + H2O. It catalyses the reaction a (3S)-3-hydroxyacyl-CoA + NAD(+) = a 3-oxoacyl-CoA + NADH + H(+). The catalysed reaction is (3S)-3-hydroxybutanoyl-CoA = (3R)-3-hydroxybutanoyl-CoA. Its pathway is lipid metabolism; fatty acid beta-oxidation. Functionally, catalyzes the formation of a hydroxyacyl-CoA by addition of water on enoyl-CoA. Also exhibits 3-hydroxyacyl-CoA epimerase and 3-hydroxyacyl-CoA dehydrogenase activities. The chain is Fatty acid oxidation complex subunit alpha from Escherichia coli O45:K1 (strain S88 / ExPEC).